Reading from the N-terminus, the 319-residue chain is Syntaxin ufe1 (319 aa).

The Cytoplasmic segment spans residues 1–297 (MTSRTNEFFG…IKAKSRSSRT (297 aa)). In terms of domain architecture, t-SNARE coiled-coil homology spans 228 to 290 (LQEFEHTMER…SGGNQQLIKA (63 aa)). The chain crosses the membrane as a helical; Anchor for type IV membrane protein span at residues 298 to 315 (ARLLFCIFTVMGLLLLSL). Residues 316-319 (DRIV) are Lumenal-facing.

It belongs to the syntaxin family. In terms of assembly, component of a SNARE complex consisting of ufe1, use1, sec20 and sec22 or ykt6. Interacts with sad1.

It localises to the endoplasmic reticulum membrane. Functionally, syntaxin required for targeting and fusion of Golgi-derived retrograde transport vesicles with the ER. This chain is Syntaxin ufe1 (ufe1), found in Schizosaccharomyces pombe (strain 972 / ATCC 24843) (Fission yeast).